A 585-amino-acid polypeptide reads, in one-letter code: Protein-lysine N-methyltransferase EFM1 (585 aa).

In terms of domain architecture, SET spans 23-281 (PKISFRITED…AQDELFNNYG (259 aa)). Residue Tyr280 coordinates S-adenosyl-L-methionine.

It belongs to the class V-like SAM-binding methyltransferase superfamily. RKM1 family.

Its subcellular location is the cytoplasm. Its function is as follows. S-adenosyl-L-methionine-dependent protein-lysine N-methyltransferase that monomethylates elongation factor 1-alpha (TEF1/TEF2) at 'Lys-30'. In Saccharomyces cerevisiae (strain ATCC 204508 / S288c) (Baker's yeast), this protein is Protein-lysine N-methyltransferase EFM1.